The primary structure comprises 140 residues: Putative pre-16S rRNA nuclease (140 aa).

Belongs to the YqgF nuclease family.

The protein resides in the cytoplasm. Could be a nuclease involved in processing of the 5'-end of pre-16S rRNA. This Mycoplasma pneumoniae (strain ATCC 29342 / M129 / Subtype 1) (Mycoplasmoides pneumoniae) protein is Putative pre-16S rRNA nuclease.